The chain runs to 299 residues: ATP phosphoribosyltransferase (299 aa).

The protein belongs to the ATP phosphoribosyltransferase family. Long subfamily. Mg(2+) serves as cofactor.

The protein localises to the cytoplasm. The enzyme catalyses 1-(5-phospho-beta-D-ribosyl)-ATP + diphosphate = 5-phospho-alpha-D-ribose 1-diphosphate + ATP. The protein operates within amino-acid biosynthesis; L-histidine biosynthesis; L-histidine from 5-phospho-alpha-D-ribose 1-diphosphate: step 1/9. With respect to regulation, feedback inhibited by histidine. Catalyzes the condensation of ATP and 5-phosphoribose 1-diphosphate to form N'-(5'-phosphoribosyl)-ATP (PR-ATP). Has a crucial role in the pathway because the rate of histidine biosynthesis seems to be controlled primarily by regulation of HisG enzymatic activity. The sequence is that of ATP phosphoribosyltransferase from Shewanella denitrificans (strain OS217 / ATCC BAA-1090 / DSM 15013).